The chain runs to 350 residues: MAGRSLGKAVATVSLSVALASVTVRSSGCRAIPAPRNPFPSCGFHLKANIMSGSNGVKDNSHNKARTSPYPGSKVERSKVPNEKVGWLVEWQDYNPVEYTAVSVLAGPQWADPQISESSFSPRFNEKDGHVERKSQNGLYEIENGRPRNPAGRTGLVGRGLLGRWGPNHAADPIITRWKRDESGNKITHPVSGKCILQFVAIKRKDCGEWAIPGGMVDPGEKISATLKREFGEEALNSLQKSSAEKREIEEKLHALFSQEHLVIYKGYVDDPRNTDNAWMETEAVNYHDETGETMDNLTLEAGDDAGKVKWVDISDQLKLYASHSQFIKLVAEKRDAHWSEDCAADSHGL.

A mitochondrion-targeting transit peptide spans 1–46; the sequence is MAGRSLGKAVATVSLSVALASVTVRSSGCRAIPAPRNPFPSCGFHL. Disordered stretches follow at residues 53–77 and 116–153; these read GSNG…KVER and SESS…PAGR. Serine 121 carries the phosphoserine modification. The span at 124–135 shows a compositional bias: basic and acidic residues; the sequence is FNEKDGHVERKS. Residues 178–334 enclose the Nudix hydrolase domain; it reads WKRDESGNKI…SQFIKLVAEK (157 aa). Positions 215–237 match the Nudix box motif; sequence GMVDPGEKISATLKREFGEEALN.

Belongs to the Nudix hydrolase family. NudF subfamily. As to quaternary structure, monomer. Interacts with GLOD4. Mg(2+) is required as a cofactor. Requires Mn(2+) as cofactor.

The protein resides in the mitochondrion. The enzyme catalyses ADP-D-ribose + H2O = D-ribose 5-phosphate + AMP + 2 H(+). In terms of biological role, hydrolyzes ADP-ribose (ADPR) to AMP and ribose 5'-phosphate. The polypeptide is ADP-ribose pyrophosphatase, mitochondrial (Nudt9) (Rattus norvegicus (Rat)).